The chain runs to 376 residues: Chanoclavine-I aldehyde reductase easA (376 aa).

FMN contacts are provided by residues 29–31 (PTT), Ala64, Gln106, and His173. Substrate-binding residues include His173 and Asn176. Tyr178 acts as the Proton donor in catalysis. Residues Lys225, Gly297, 323-324 (GR), and Arg324 contribute to the FMN site. Tyr351 lines the substrate pocket.

This sequence belongs to the NADH:flavin oxidoreductase/NADH oxidase family. It depends on FMN as a cofactor.

It carries out the reaction dihydrochanoclavine-I aldehyde + NADP(+) = chanoclavine-I aldehyde + NADPH + H(+). It participates in alkaloid biosynthesis; ergot alkaloid biosynthesis. Its function is as follows. Aldehyde reductase; part of the gene cluster that mediates the biosynthesis of fumiclavanine C, a fungal ergot alkaloid. DmaW catalyzes the first step of ergot alkaloid biosynthesis by condensing dimethylallyl diphosphate (DMAP) and tryptophan to form 4-dimethylallyl-L-tryptophan. The second step is catalyzed by the methyltransferase easF that methylates 4-dimethylallyl-L-tryptophan in the presence of S-adenosyl-L-methionine, resulting in the formation of 4-dimethylallyl-L-abrine. The catalase easC and the FAD-dependent oxidoreductase easE then transform 4-dimethylallyl-L-abrine to chanoclavine-I which is further oxidized by EasD in the presence of NAD(+), resulting in the formation of chanoclavine-I aldehyde. EasA reduces chanoclavine-I aldehyde to dihydrochanoclavine-I aldehyde that spontaneously dehydrates to form 6,8-dimethyl-6,7-didehydroergoline. EasG then catalyzes the reduction of 6,8-dimethyl-6,7-didehydroergoline to form festuclavine. Hydrolysis of festuclavine by easM then leads to the formation of fumigaclavine B which is in turn acetylated by easN to fumigaclavine A. Finally, easL catalyzes the conversion of fumigaclavine A into fumigaclavine C by attaching a dimethylallyl moiety to C-2 of the indole nucleus. This Aspergillus fumigatus (strain ATCC MYA-4609 / CBS 101355 / FGSC A1100 / Af293) (Neosartorya fumigata) protein is Chanoclavine-I aldehyde reductase easA.